Here is a 102-residue protein sequence, read N- to C-terminus: Small ribosomal subunit protein uS10 (102 aa).

The protein belongs to the universal ribosomal protein uS10 family. In terms of assembly, part of the 30S ribosomal subunit.

In terms of biological role, involved in the binding of tRNA to the ribosomes. This Pelobacter propionicus (strain DSM 2379 / NBRC 103807 / OttBd1) protein is Small ribosomal subunit protein uS10.